A 286-amino-acid chain; its full sequence is Probable endonuclease 4 (286 aa).

Residues His67, His107, Glu146, Asp180, His183, His217, Asp230, His232, and Glu262 each contribute to the Zn(2+) site.

Belongs to the AP endonuclease 2 family. Zn(2+) serves as cofactor.

The enzyme catalyses Endonucleolytic cleavage to 5'-phosphooligonucleotide end-products.. Endonuclease IV plays a role in DNA repair. It cleaves phosphodiester bonds at apurinic or apyrimidinic (AP) sites, generating a 3'-hydroxyl group and a 5'-terminal sugar phosphate. The chain is Probable endonuclease 4 from Methanosphaerula palustris (strain ATCC BAA-1556 / DSM 19958 / E1-9c).